Consider the following 323-residue polypeptide: Coiled-coil domain-containing protein 160 (323 aa).

Residues 143–290 (SKLRLNLLNE…IKNELRTEKS (148 aa)) are a coiled coil.

This sequence belongs to the CCDC160 family.

The sequence is that of Coiled-coil domain-containing protein 160 (CCDC160) from Bos taurus (Bovine).